A 195-amino-acid polypeptide reads, in one-letter code: Imidazoleglycerol-phosphate dehydratase (195 aa).

This sequence belongs to the imidazoleglycerol-phosphate dehydratase family.

It localises to the cytoplasm. The catalysed reaction is D-erythro-1-(imidazol-4-yl)glycerol 3-phosphate = 3-(imidazol-4-yl)-2-oxopropyl phosphate + H2O. It functions in the pathway amino-acid biosynthesis; L-histidine biosynthesis; L-histidine from 5-phospho-alpha-D-ribose 1-diphosphate: step 6/9. The polypeptide is Imidazoleglycerol-phosphate dehydratase (Burkholderia lata (strain ATCC 17760 / DSM 23089 / LMG 22485 / NCIMB 9086 / R18194 / 383)).